The following is a 354-amino-acid chain: Probable butyrate kinase 2 (354 aa).

This sequence belongs to the acetokinase family.

The protein resides in the cytoplasm. It carries out the reaction butanoate + ATP = butanoyl phosphate + ADP. In Caldanaerobacter subterraneus subsp. tengcongensis (strain DSM 15242 / JCM 11007 / NBRC 100824 / MB4) (Thermoanaerobacter tengcongensis), this protein is Probable butyrate kinase 2.